The primary structure comprises 153 residues: Histone H2B.10 (153 aa).

2 stretches are compositionally biased toward basic and acidic residues: residues 1–28 and 36–53; these read MAPKAEKKPAAKKPAEEEPAAEKAEKAL and EKRLPAGKAEKSSGEGKK. The disordered stretch occupies residues 1–61; that stretch reads MAPKAEKKPA…KKAGRKKAKK (61 aa). N6-acetyllysine occurs at positions 7 and 37. Residue K149 forms a Glycyl lysine isopeptide (Lys-Gly) (interchain with G-Cter in ubiquitin) linkage.

It belongs to the histone H2B family. The nucleosome is a histone octamer containing two molecules each of H2A, H2B, H3 and H4 assembled in one H3-H4 heterotetramer and two H2A-H2B heterodimers. The octamer wraps approximately 147 bp of DNA. Can be acetylated to form H2BK6ac and H2BK33ac. In terms of processing, monoubiquitinated by BRE1 to form H2BK143ub1 and deubiquitinated by UBP26. Required for heterochromatic histone H3 di- and trimethylation at H3K4me. May give a specific tag for epigenetic transcriptional activation.

It localises to the nucleus. It is found in the chromosome. Functionally, core component of nucleosome. Nucleosomes wrap and compact DNA into chromatin, limiting DNA accessibility to the cellular machineries which require DNA as a template. Histones thereby play a central role in transcription regulation, DNA repair, DNA replication and chromosomal stability. DNA accessibility is regulated via a complex set of post-translational modifications of histones, also called histone code, and nucleosome remodeling. The sequence is that of Histone H2B.10 (H2B.10) from Oryza sativa subsp. japonica (Rice).